Here is a 504-residue protein sequence, read N- to C-terminus: 5-epiaristolochene 1,3-dihydroxylase (504 aa).

Residues 2-22 (QFFSLVSIFLFLSFLFLLRKW) form a helical membrane-spanning segment. Cys-442 contacts heme.

This sequence belongs to the cytochrome P450 family. Requires heme as cofactor.

The protein resides in the membrane. The enzyme catalyses (+)-5-epi-aristolochene + 2 reduced [NADPH--hemoprotein reductase] + 2 O2 = capsidiol + 2 oxidized [NADPH--hemoprotein reductase] + 2 H2O + 2 H(+). With respect to regulation, inhibited by ancymidol and ketoconazole. Involved in the biosynthesis of capsidiol. Catalyzes the successive and independent hydroxylations at the C1 and C3 positions of 5-epiaristolochene. The second hydroxylation step is 8-fold more efficient than the first hydroxylation reaction. Capable of utilizing premnaspirodiene as a substrate. The protein is 5-epiaristolochene 1,3-dihydroxylase (CYP71D20) of Nicotiana tabacum (Common tobacco).